The following is a 99-amino-acid chain: Small integral membrane protein 14 (99 aa).

Topologically, residues 1-49 (MAEGGFDPCECVCSHEHAMRRLINLLRQSQSYCTDTECLQELPGPSGDN) are lumenal. A helical transmembrane segment spans residues 50 to 70 (GISVTMILVAWMVIALILFLL). At 71–99 (RPPNLRGSNLPGKPTSPHNGQDPPAPPVD) the chain is on the cytoplasmic side. The tract at residues 77 to 99 (GSNLPGKPTSPHNGQDPPAPPVD) is disordered.

It localises to the endoplasmic reticulum membrane. This chain is Small integral membrane protein 14 (SMIM14), found in Pongo abelii (Sumatran orangutan).